The sequence spans 141 residues: Large ribosomal subunit protein uL11 (141 aa).

This sequence belongs to the universal ribosomal protein uL11 family. As to quaternary structure, part of the ribosomal stalk of the 50S ribosomal subunit. Interacts with L10 and the large rRNA to form the base of the stalk. L10 forms an elongated spine to which L12 dimers bind in a sequential fashion forming a multimeric L10(L12)X complex. One or more lysine residues are methylated.

Functionally, forms part of the ribosomal stalk which helps the ribosome interact with GTP-bound translation factors. This is Large ribosomal subunit protein uL11 from Aster yellows witches'-broom phytoplasma (strain AYWB).